Here is a 179-residue protein sequence, read N- to C-terminus: ATP synthase subunit delta (179 aa).

Belongs to the ATPase delta chain family. In terms of assembly, F-type ATPases have 2 components, F(1) - the catalytic core - and F(0) - the membrane proton channel. F(1) has five subunits: alpha(3), beta(3), gamma(1), delta(1), epsilon(1). F(0) has three main subunits: a(1), b(2) and c(10-14). The alpha and beta chains form an alternating ring which encloses part of the gamma chain. F(1) is attached to F(0) by a central stalk formed by the gamma and epsilon chains, while a peripheral stalk is formed by the delta and b chains.

Its subcellular location is the cell inner membrane. In terms of biological role, f(1)F(0) ATP synthase produces ATP from ADP in the presence of a proton or sodium gradient. F-type ATPases consist of two structural domains, F(1) containing the extramembraneous catalytic core and F(0) containing the membrane proton channel, linked together by a central stalk and a peripheral stalk. During catalysis, ATP synthesis in the catalytic domain of F(1) is coupled via a rotary mechanism of the central stalk subunits to proton translocation. Functionally, this protein is part of the stalk that links CF(0) to CF(1). It either transmits conformational changes from CF(0) to CF(1) or is implicated in proton conduction. This chain is ATP synthase subunit delta, found in Acidobacterium capsulatum (strain ATCC 51196 / DSM 11244 / BCRC 80197 / JCM 7670 / NBRC 15755 / NCIMB 13165 / 161).